The primary structure comprises 445 residues: Phosphoglucosamine mutase (445 aa).

Catalysis depends on Ser-102, which acts as the Phosphoserine intermediate. The Mg(2+) site is built by Ser-102, Asp-241, Asp-243, and Asp-245. Ser-102 bears the Phosphoserine mark.

It belongs to the phosphohexose mutase family. Mg(2+) serves as cofactor. Activated by phosphorylation.

It catalyses the reaction alpha-D-glucosamine 1-phosphate = D-glucosamine 6-phosphate. Functionally, catalyzes the conversion of glucosamine-6-phosphate to glucosamine-1-phosphate. In Escherichia coli O157:H7, this protein is Phosphoglucosamine mutase.